The primary structure comprises 281 residues: uncharacterized protein (281 aa).

The next 4 membrane-spanning stretches (helical) occupy residues 8–28, 97–117, 147–167, and 210–230; these read ALPV…FIWS, LAVA…RGYG, PARI…GLAV, and IASV…IVPA.

The protein to S.pombe bem46 and yeast YNL320w.

The protein resides in the cell membrane. This is an uncharacterized protein from Mycobacterium tuberculosis (strain ATCC 25618 / H37Rv).